Here is a 290-residue protein sequence, read N- to C-terminus: MDYKHFKGVHANIVIEVISLLEKGVKKAQEILEKPDAGSYTKLENSSGDTPIKADLALDKFLEENFLSLENVKSVFSEEKEKPVTKENGSYLIAYDPLDGSSVMEANFLVGTIIGIYEKDYKAHNLAASLYVVFGHKIELVVALDQVYRYAFYQNKFHFIETIALENKGKIVASGGNQKDFSMGLKKALEGFFTENYRLRYSGSMVADVHHVLIKKGGVFSYPQKKLRKLFEVFPLALIIEKAKGEAFYFDKGVKKRLLDQGVESYHEKSECYLTSQHEAQILEKYLKGE.

Residues E78, D96, L98, and D99 each coordinate Mg(2+). Residues 99-102 (DGSS), Y201, and K226 contribute to the substrate site. E232 contributes to the Mg(2+) binding site.

Belongs to the FBPase class 1 family. In terms of assembly, homotetramer. The cofactor is Mg(2+).

The protein localises to the cytoplasm. It carries out the reaction beta-D-fructose 1,6-bisphosphate + H2O = beta-D-fructose 6-phosphate + phosphate. Its pathway is carbohydrate biosynthesis; gluconeogenesis. This is Fructose-1,6-bisphosphatase class 1 from Helicobacter acinonychis (strain Sheeba).